Reading from the N-terminus, the 355-residue chain is Uroporphyrinogen decarboxylase (355 aa).

Substrate is bound by residues 27–31 (RQAGR), Asp-77, Tyr-154, Thr-209, and His-327.

The protein belongs to the uroporphyrinogen decarboxylase family. In terms of assembly, homodimer.

It localises to the cytoplasm. It carries out the reaction uroporphyrinogen III + 4 H(+) = coproporphyrinogen III + 4 CO2. The protein operates within porphyrin-containing compound metabolism; protoporphyrin-IX biosynthesis; coproporphyrinogen-III from 5-aminolevulinate: step 4/4. Functionally, catalyzes the decarboxylation of four acetate groups of uroporphyrinogen-III to yield coproporphyrinogen-III. This is Uroporphyrinogen decarboxylase from Yersinia pestis bv. Antiqua (strain Antiqua).